A 256-amino-acid polypeptide reads, in one-letter code: Cell division protein DivIB (256 aa).

The Cytoplasmic segment spans residues 1–23 (MSKDLISTDEYIKIKKKRKRIKK). Residues 24 to 44 (IVVLFIFLISILVTLCLKIPY) form a helical membrane-spanning segment. In terms of domain architecture, POTRA spans 45 to 113 (FNIESIEIKG…NKLEIYVKER (69 aa)). The Extracellular portion of the chain corresponds to 45 to 256 (FNIESIEIKG…EGNPVFYIEK (212 aa)).

It belongs to the FtsQ/DivIB family. DivIB subfamily.

The protein localises to the cell membrane. Its function is as follows. Cell division protein that may be involved in stabilizing or promoting the assembly of the division complex. The sequence is that of Cell division protein DivIB from Clostridium botulinum (strain Loch Maree / Type A3).